We begin with the raw amino-acid sequence, 832 residues long: MPLEMDQKVNKLTFGCQRSSTSDDDSGCAMEEYTWVPPGLRPEQVQLYFACLPEEKIPYVNSIGEKYRIKQLLYQLPPHDNEVRYCQSLCEEEKKELQMFSGQRKKEALGRGNIKMLSRAVMHAMCEKCGEKINGGEIAIFVSRAGPGVCWHPSCFVCSTCNELLVDLIYFYQDGKIHCGRHHAELLKPRCSACDEIIFADECTEAEGRHWHMNHFCCYECETVLGGQRYIMKDGRPFCCGCFESHYAEYCESCGDHIGVDHAQMTYDGQHWHATETCFSCAQCKVSLLGCPFLPKKGRIYCSKACSLGEDVHASDSSDSAFQSARSRESRRSVRMGKSSRSADQCRQSLLLSPALNYKFPGMSGNADDTLSRKMDDLGISRQGAGFDNDFWKARDEQETPEDHEEWAEHDDYMTQLLLKFGEKGLFQQPSEDNRSTEHWMSENIKGKNDLQRNNRNKSLASKKYQSDMYWTQSQDGLGDSAYGSHPGPASSRKLQELDMDHGASAYMHEKMPWYKRSLECLSDNLKPQNENIRDSMDSLALSNITGASVDGENKSRPSLFCYQNFQDLNTRDCEKMSNMGTLNSSMLNRSTESLKSLTSEICQEKPPPEEKPMHTSALRRSKSQTRPQVKFSDDVIDNGDYGSIEIRQPPMSERSRRRVYNFEERSQRPHHHRRRKSRKSRSENALHLATDSKPSGKERNRFYTAEDYERLFHNKSAHQVQAYIQNADLFGQYSNAASNVGLPSKVAGKFLGLYGEDEDSWCSTCSSSSSDSEEEGYFLGQPIPKPRPQRYQYFSDDLCSPTNALSSSQFSQRTTKSKKKKGHKGKNCIIS.

The 109-residue stretch at 14-122 (FGCQRSSTSD…NIKMLSRAVM (109 aa)) folds into the PET domain. LIM zinc-binding domains lie at 124–188 (AMCE…ELLK), 189–249 (PRCS…HYAE), and 250–313 (YCES…EDVH). 4 disordered regions span residues 312–346 (VHAS…ADQC), 428–455 (QQPS…QRNN), 602–701 (ICQE…KERN), and 766–832 (CSSS…CIIS). Composition is skewed to basic and acidic residues over residues 432-453 (EDNR…DLQR) and 603-614 (CQEKPPPEEKPM). Composition is skewed to basic residues over residues 669-680 (RPHHHRRRKSRK) and 816-832 (TKSK…CIIS). Cys-829 carries the post-translational modification Cysteine methyl ester. Cys-829 is lipidated: S-farnesyl cysteine. The propeptide at 830–832 (IIS) is removed in mature form.

This sequence belongs to the prickle / espinas / testin family. As to quaternary structure, interacts with dvl2/dsh and mapk8/jnk1. As to expression, expressed in the dorsal marginal zone of early gastrulae (stage 10). As gastrulation proceeds, expression expands to include the lateral and ventral marginal zones, excluding the few rows of cells above the blastopore lip. Expression moves dorsally with gastrulation cell movements, and by the end of gastrulation expression is seen in dorsal mesoderm and posterior but not anterior neural ectoderm. Expression becomes down-regulated in mesoderm but remains strong in posterior ectoderm through the neurula stages. During tailbud stages, expressed in the pronephric duct, tailbud, tailtip and forming somites. In the most posterior regions, expressed in notochord and in the floorplate of the neural tube with weak expression in the roofplate. At stage 30, expressed in a complex pattern in the head including strong expression in the lens and otic vesicle.

Its subcellular location is the cell membrane. In terms of biological role, acts in a planar cell polarity (PCP) complex; polarization along the apical/basal axis of epithelial cells. Regulates the polarized assembly of fibronectrin on the surface of the mesoderm during gastrulation. Essential for gastrulation cell movements, cooperating with dvl2/dsh to activate jnk. Acts together with tes to control axial elongation. The polypeptide is Prickle-like protein 1-B (prickle1-b) (Xenopus laevis (African clawed frog)).